An 869-amino-acid polypeptide reads, in one-letter code: TATA box-binding protein-associated factor RNA polymerase I subunit C (869 aa).

2 disordered regions span residues 605 to 629 (SSLRRDAGPPGDTQPDCHAPTASWT) and 729 to 869 (GAAW…RMGF). Position 834 is a phosphothreonine (Thr-834). Over residues 835–860 (PPHSQASSVRATRSQQHTPVLSSSQP) the composition is skewed to polar residues. The residue at position 848 (Ser-848) is a Phosphoserine.

Component of the transcription factor SL1/TIF-IB complex, composed of TBP and at least TAF1A, TAF1B, TAF1C and TAF1D. In the complex interacts directly with TBP, TAF1A and TAF1B. Interaction of the SL1/TIF-IB subunits with TBP excludes interaction of TBP with the transcription factor IID (TFIID) subunits. Interacts with MYC and RRN3. Interacts with p53/TP53; the interaction prevents the association of SL1/TIF-IB with UBTF and represses RNA polymerase I transcription. Part of Pol I pre-initiation complex (PIC), in which Pol I core assembles with RRN3 and promoter-bound UTBF and SL1/TIF-IB complex.

The protein resides in the nucleus. It is found in the nucleolus. Its function is as follows. Component of the transcription factor SL1/TIF-IB complex, which is involved in the assembly of the PIC (pre-initiation complex) during RNA polymerase I-dependent transcription. The rate of PIC formation probably is primarily dependent on the rate of association of SL1/TIF-IB with the rDNA promoter. SL1/TIF-IB is involved in stabilization of nucleolar transcription factor 1/UBTF on rDNA. Formation of SL1/TIF-IB excludes the association of TBP with TFIID subunits. Recruits RNA polymerase I to the rRNA gene promoter via interaction with RRN3. This chain is TATA box-binding protein-associated factor RNA polymerase I subunit C (TAF1C), found in Homo sapiens (Human).